The primary structure comprises 783 residues: Ubiquitin carboxyl-terminal hydrolase 1 (783 aa).

Disordered stretches follow at residues 1–22 (MPGV…KKNR) and 34–55 (KRAL…YKGS). A compositionally biased stretch (polar residues) spans 7-16 (SESNGLSRGS). Phosphoserine occurs at positions 16 and 42. Over residues 45 to 55 (NEEKTSEYKGS) the composition is skewed to basic and acidic residues. Ser-67 is modified (phosphoserine). A USP domain is found at 81–783 (VGLNNLGNTC…TPYLLFYKKL (703 aa)). The active-site Nucleophile is the Cys-90. Residues 234-311 (EEYQKEEMSD…RKAAGDTLEI (78 aa)) form a disordered region. 2 stretches are compositionally biased toward basic and acidic residues: residues 250–273 (DNMR…KSDA) and 284–296 (ISKE…ENQR). Residue Ser-473 is modified to Phosphoserine. The Proton acceptor role is filled by His-591. The interval 685–722 (PDKVASTALPENRNSETNNTNGTDESDSNKESSDQTGI) is disordered. Residue Ser-766 is modified to Phosphoserine.

The protein belongs to the peptidase C19 family. As to quaternary structure, interacts with FANCD2 and PCNA. Interacts with WDR48. Interacts with ATAD5; the interaction regulates USP1-mediated PCNA deubiquitination. Post-translationally, autocatalytic cleavage of USP1 following UV irradiation inactivates it, leading to an increase in ubiquitinated PCNA, recruitment of POLH and translesion synthesis. In terms of processing, ubiquitinated by the CRL2(KLHDC2) complex following autocatalytic cleavage, leading to its degradation: the CRL2(KLHDC2) complex recognizes the diglycine (Gly-Gly) at the C-terminus.

Its subcellular location is the nucleus. It catalyses the reaction Thiol-dependent hydrolysis of ester, thioester, amide, peptide and isopeptide bonds formed by the C-terminal Gly of ubiquitin (a 76-residue protein attached to proteins as an intracellular targeting signal).. Negative regulator of DNA damage repair which specifically deubiquitinates monoubiquitinated FANCD2. Also involved in PCNA-mediated translesion synthesis (TLS) by deubiquitinating monoubiquitinated PCNA. Has almost no deubiquitinating activity by itself and requires the interaction with WDR48 to have a high activity. This Bos taurus (Bovine) protein is Ubiquitin carboxyl-terminal hydrolase 1.